Reading from the N-terminus, the 102-residue chain is Anti-lipopolysaccharide factor (102 aa).

Cysteine 32 and cysteine 53 are disulfide-bonded.

In terms of biological role, binds tightly to LPS and thus specifically inhibits the LPS-mediated activation of the hemolymph coagulation. It has a strong antibacterial effect especially on the growth of Gram-negative bacteria. The sequence is that of Anti-lipopolysaccharide factor from Tachypleus tridentatus (Japanese horseshoe crab).